We begin with the raw amino-acid sequence, 343 residues long: Dihydroorotase (343 aa).

Residues H14 and H16 each contribute to the Zn(2+) site. Substrate is bound by residues 16–18 (HLR) and N42. The Zn(2+) site is built by K99, H136, and H174. At K99 the chain carries N6-carboxylysine. Position 136 (H136) interacts with substrate. Residue L219 coordinates substrate. D247 serves as a coordination point for Zn(2+). The active site involves D247. The substrate site is built by H251 and A263.

Belongs to the metallo-dependent hydrolases superfamily. DHOase family. Class II DHOase subfamily. In terms of assembly, homodimer. Requires Zn(2+) as cofactor.

It carries out the reaction (S)-dihydroorotate + H2O = N-carbamoyl-L-aspartate + H(+). It functions in the pathway pyrimidine metabolism; UMP biosynthesis via de novo pathway; (S)-dihydroorotate from bicarbonate: step 3/3. Functionally, catalyzes the reversible cyclization of carbamoyl aspartate to dihydroorotate. The protein is Dihydroorotase of Psychromonas ingrahamii (strain DSM 17664 / CCUG 51855 / 37).